The sequence spans 596 residues: DNA mismatch repair protein MutL (596 aa).

Belongs to the DNA mismatch repair MutL/HexB family.

In terms of biological role, this protein is involved in the repair of mismatches in DNA. It is required for dam-dependent methyl-directed DNA mismatch repair. May act as a 'molecular matchmaker', a protein that promotes the formation of a stable complex between two or more DNA-binding proteins in an ATP-dependent manner without itself being part of a final effector complex. The sequence is that of DNA mismatch repair protein MutL from Leptospira borgpetersenii serovar Hardjo-bovis (strain JB197).